Consider the following 179-residue polypeptide: UPF0227 protein Sbal_2415 (179 aa).

The protein belongs to the UPF0227 family.

The chain is UPF0227 protein Sbal_2415 from Shewanella baltica (strain OS155 / ATCC BAA-1091).